Here is a 655-residue protein sequence, read N- to C-terminus: Peroxidase skpo-1 (655 aa).

The first 19 residues, 1-19 (MKSLLFSILLIYLIQLVRS), serve as a signal peptide directing secretion. Positions 22 to 56 (CTDKHIHCFFWSQEGECEVNPRWMKKHCQKACGTC) constitute a ShKT domain. Intrachain disulfides connect cysteine 22–cysteine 56, cysteine 29–cysteine 49, cysteine 38–cysteine 53, and cysteine 133–cysteine 150. Residue histidine 222 is the Proton acceptor of the active site. Residue histidine 428 coordinates heme b. 2 disulfides stabilise this stretch: cysteine 520-cysteine 576 and cysteine 617-cysteine 642.

Belongs to the peroxidase family. XPO subfamily. Requires heme b as cofactor. As to expression, exclusively expressed in hypodermis.

It carries out the reaction 2 a phenolic donor + H2O2 = 2 a phenolic radical donor + 2 H2O. Functionally, involved in hypodermal immune response against some types of bacterial infection. Probably utilizes H(2)O(2) produced by the NADPH oxidase bli-3. May play a role in cuticule biosynthesis. This chain is Peroxidase skpo-1, found in Caenorhabditis elegans.